Here is a 683-residue protein sequence, read N- to C-terminus: Glycine--tRNA ligase beta subunit (683 aa).

It belongs to the class-II aminoacyl-tRNA synthetase family. Tetramer of two alpha and two beta subunits.

Its subcellular location is the cytoplasm. The enzyme catalyses tRNA(Gly) + glycine + ATP = glycyl-tRNA(Gly) + AMP + diphosphate. The sequence is that of Glycine--tRNA ligase beta subunit from Pseudomonas putida (strain W619).